Consider the following 445-residue polypeptide: MYKITKGLDLPISGAPNQVIETAAAAKTVAVIGPDFHGMKPTMLVKEGDKVKKGQIIFTDKKTEGVNYTAPASGTVIEINRGERRVFQSLVIRVEGDESETFTSYSGSELKSLERSKVVDNLVNSGLWTSFRTRPFSKVPEIASVPNSIFVTAIDTNPLAASPEVVLADQAEAFADGLTVLTRLTEGKVFLCKASGAKIPTTSDVTVEEFSGVHPAGLAGTHIHFLDPVNDKKTVWSINYQDVVAIGKLFVTGELSVERVISVAGPQVKKPRLVRTQVGVSLNDLLAGELSEGDNRVISGSVLSGRKAFGPFAYLGRYHNQVSVLLEGRERQMMHYLRAGVEKHSIMNVFLSKLTGKKSFDMTTTTNGSDRTMLPLGNFERVMPLDILPTQLLRALVVNDTEQAQKLGALELDDEDLALCTYSCSGKFEYGPILRDCLTLIEKEG.

The protein belongs to the NqrA family. Composed of six subunits; NqrA, NqrB, NqrC, NqrD, NqrE and NqrF.

It catalyses the reaction a ubiquinone + n Na(+)(in) + NADH + H(+) = a ubiquinol + n Na(+)(out) + NAD(+). In terms of biological role, NQR complex catalyzes the reduction of ubiquinone-1 to ubiquinol by two successive reactions, coupled with the transport of Na(+) ions from the cytoplasm to the periplasm. NqrA to NqrE are probably involved in the second step, the conversion of ubisemiquinone to ubiquinol. In Marinomonas sp. (strain MWYL1), this protein is Na(+)-translocating NADH-quinone reductase subunit A.